A 128-amino-acid chain; its full sequence is Small ribosomal subunit protein bS6 (128 aa).

The protein belongs to the bacterial ribosomal protein bS6 family.

Binds together with bS18 to 16S ribosomal RNA. This is Small ribosomal subunit protein bS6 from Geotalea uraniireducens (strain Rf4) (Geobacter uraniireducens).